Here is a 137-residue protein sequence, read N- to C-terminus: Large ribosomal subunit protein uL16c (137 aa).

Belongs to the universal ribosomal protein uL16 family. As to quaternary structure, part of the 50S ribosomal subunit.

The protein resides in the plastid. It is found in the chloroplast. The protein is Large ribosomal subunit protein uL16c of Bigelowiella natans (Pedinomonas minutissima).